We begin with the raw amino-acid sequence, 106 residues long: MVRILRWFIRLYQIAISPLLGPRCRYIPTCSQYALEALQTHGAIKGVWLSSKRICRCHPWGGSGYDPVPLKAIRFISFHQIDSQTHHVAVPFRDRLMKQNLSNHLG.

It belongs to the UPF0161 family.

The protein resides in the cell inner membrane. Could be involved in insertion of integral membrane proteins into the membrane. The polypeptide is Putative membrane protein insertion efficiency factor (Acinetobacter baumannii (strain SDF)).